A 466-amino-acid chain; its full sequence is MAKTLYEKLFDAHVVYEAENETPLLYIDRHLVHEVTSPQAFDGLRTHGRPVRQPGKTFATMDHNVSTQTKDINACGEMARIQMQELIKNCKEFGVELYDLNHPYQGIVHVMGPEQGVTLPGMTIVCGDSHTATHGAFGALAFGIGTSEVEHVLATQTLKQGRAKTMKIEVQGKAAPGITAKDIVLAIIGKTGSAGGTGHVVEFCGEAIRDLSMEGRMTLCNMAIEMGAKAGLVAPDETTFNYVKGRLHAPKGKDFDDAVAYWKTLQTDEGATFDTVVTLQAEEISPQVTWGTNPGQVISVNDNIPDPASFADPVERASAEKALAYMGLKPGIPLTEVAIDKVFIGSCTNSRIEDLRAAAEIAKGRKVAPGVQALVVPGSGPVKAQAEAEGLDKIFIEAGFEWRLPGCSMCLAMNNDRLNPGERCASTSNRNFEGRQGRGGRTHLVSPAMAAAAAVTGHFADIRNIK.

Positions 347, 407, and 410 each coordinate [4Fe-4S] cluster.

Belongs to the aconitase/IPM isomerase family. LeuC type 1 subfamily. In terms of assembly, heterodimer of LeuC and LeuD. Requires [4Fe-4S] cluster as cofactor.

It carries out the reaction (2R,3S)-3-isopropylmalate = (2S)-2-isopropylmalate. It participates in amino-acid biosynthesis; L-leucine biosynthesis; L-leucine from 3-methyl-2-oxobutanoate: step 2/4. In terms of biological role, catalyzes the isomerization between 2-isopropylmalate and 3-isopropylmalate, via the formation of 2-isopropylmaleate. This is 3-isopropylmalate dehydratase large subunit from Escherichia coli (strain 55989 / EAEC).